The chain runs to 522 residues: Response regulator mcs4 (522 aa).

Residues 148–274 form a disordered region; that stretch reads DSLESPVSAP…RSISHSSLYT (127 aa). Polar residues predominate over residues 174-194; it reads NLRNASRTRSHQTLPSSNVNK. Residues 244 to 255 are compositionally biased toward basic and acidic residues; it reads RSDESTAEKLAK. Polar residues predominate over residues 260–274; the sequence is TPTNSRSISHSSLYT. The region spanning 363–505 is the Response regulatory domain; that stretch reads NVLIVEDNII…WLEKKITEWG (143 aa). Asp-412 is modified (4-aspartylphosphate).

The protein resides in the cytoplasm. Functionally, response regulator that coordinately controls the stress activated wak1-wis1-sty1 MAP kinase pathway and fission yeast cell cycle. In Schizosaccharomyces pombe (strain 972 / ATCC 24843) (Fission yeast), this protein is Response regulator mcs4 (mcs4).